The following is a 224-amino-acid chain: Adenylate kinase (224 aa).

ATP is bound at residue 10-15 (GSGKST). The NMP stretch occupies residues 30-59 (SSGDLIRGEIERKSSLGLEMAAYLSRGDLI). AMP is bound by residues S31, R36, 57–59 (DLI), 83–86 (GYPR), and Q90. The segment at 124-161 (GRRICPNCGAVYHITYNPPKVPGICDVCGTKLIQRTDD) is LID. ATP is bound at residue R125. Zn(2+) contacts are provided by C128 and C131. 134–135 (VY) contributes to the ATP binding site. C148 and C151 together coordinate Zn(2+). AMP contacts are provided by R158 and R169. G197 is a binding site for ATP.

The protein belongs to the adenylate kinase family. Monomer.

The protein resides in the cytoplasm. It catalyses the reaction AMP + ATP = 2 ADP. It participates in purine metabolism; AMP biosynthesis via salvage pathway; AMP from ADP: step 1/1. Its function is as follows. Catalyzes the reversible transfer of the terminal phosphate group between ATP and AMP. Plays an important role in cellular energy homeostasis and in adenine nucleotide metabolism. The protein is Adenylate kinase of Thermococcus gammatolerans (strain DSM 15229 / JCM 11827 / EJ3).